A 449-amino-acid polypeptide reads, in one-letter code: Probable glycine dehydrogenase (decarboxylating) subunit 1 (449 aa).

This sequence belongs to the GcvP family. N-terminal subunit subfamily. The glycine cleavage system is composed of four proteins: P, T, L and H. In this organism, the P 'protein' is a heterodimer of two subunits.

The catalysed reaction is N(6)-[(R)-lipoyl]-L-lysyl-[glycine-cleavage complex H protein] + glycine + H(+) = N(6)-[(R)-S(8)-aminomethyldihydrolipoyl]-L-lysyl-[glycine-cleavage complex H protein] + CO2. Its function is as follows. The glycine cleavage system catalyzes the degradation of glycine. The P protein binds the alpha-amino group of glycine through its pyridoxal phosphate cofactor; CO(2) is released and the remaining methylamine moiety is then transferred to the lipoamide cofactor of the H protein. The polypeptide is Probable glycine dehydrogenase (decarboxylating) subunit 1 (Sulfurisphaera tokodaii (strain DSM 16993 / JCM 10545 / NBRC 100140 / 7) (Sulfolobus tokodaii)).